The primary structure comprises 524 residues: GMP synthase [glutamine-hydrolyzing] (524 aa).

Residues 5 to 195 enclose the Glutamine amidotransferase type-1 domain; sequence KVIVIDFGGQ…VRGVCGCAGT (191 aa). Catalysis depends on Cys-82, which acts as the Nucleophile. Residues His-169 and Glu-171 contribute to the active site. The GMPS ATP-PPase domain occupies 196–389; the sequence is WKMDAFVENT…LGIPEHLVFR (194 aa). 223–229 serves as a coordination point for ATP; that stretch reads SGGVDSS.

Homodimer.

The catalysed reaction is XMP + L-glutamine + ATP + H2O = GMP + L-glutamate + AMP + diphosphate + 2 H(+). It functions in the pathway purine metabolism; GMP biosynthesis; GMP from XMP (L-Gln route): step 1/1. Functionally, catalyzes the synthesis of GMP from XMP. The polypeptide is GMP synthase [glutamine-hydrolyzing] (Lachnospira eligens (strain ATCC 27750 / DSM 3376 / VPI C15-48 / C15-B4) (Eubacterium eligens)).